Here is a 296-residue protein sequence, read N- to C-terminus: Probable AP endonuclease (296 aa).

The cysteines at positions 16 and 20 are disulfide-linked. Zn(2+)-binding residues include H78, H115, E142, H182, H218, D231, H233, and E271.

This sequence belongs to the AP endonuclease 2 family. It depends on Zn(2+) as a cofactor.

The protein resides in the host nucleus. It localises to the host cytoplasm. Its subcellular location is the virion. Endonuclease of the viral base excision repair system that catalyzes DNA cleavage reaction at the apurinic or apyrimidinic sites (AP sites). Cleaves phosphodiester bonds on the 5' side of AP sites. In addition to endonuclease activity, the AP endonuclease has a proofreading 3'-5' exonuclease activity that is considerably more efficient in the elimination of a mismatch than in that of a correctly paired base. Displays 3'-phosphatase and 3'-repair diesterase activities. The single nucleotide gaps generated by the AP endonuclease are filled by the viral repair DNA polymerase X and the DNA ligase. The chain is Probable AP endonuclease from Ornithodoros (relapsing fever ticks).